The sequence spans 226 residues: UPF0758 protein SGO_1229 (226 aa).

One can recognise an MPN domain in the interval 103–225; it reads RILSSQKLAK…YYSYREETDL (123 aa). Zn(2+) is bound by residues His-174, His-176, and Asp-187. A JAMM motif motif is present at residues 174-187; sequence HNHPSGATRPSRDD.

The protein belongs to the UPF0758 family.

This Streptococcus gordonii (strain Challis / ATCC 35105 / BCRC 15272 / CH1 / DL1 / V288) protein is UPF0758 protein SGO_1229.